Consider the following 1295-residue polypeptide: Phosphoribosylformylglycinamidine synthase (1295 aa).

The disordered stretch occupies residues 305–327 (WPGAATGSGGEIRDEGATGRGAK). ATP is bound by residues 307 to 318 (GAATGSGGEIRD), 386 to 388 (TGY), and alanine 678. Residues aspartate 679, glutamate 718, asparagine 722, and aspartate 884 each coordinate Mg(2+). Serine 886 is an ATP binding site. The Glutamine amidotransferase type-1 domain maps to 1042 to 1295 (VAVLREQGVN…IFRNARKQLG (254 aa)). Cysteine 1135 serves as the catalytic Nucleophile. Catalysis depends on residues histidine 1260 and glutamate 1262.

In the N-terminal section; belongs to the FGAMS family. Monomer.

The protein resides in the cytoplasm. It catalyses the reaction N(2)-formyl-N(1)-(5-phospho-beta-D-ribosyl)glycinamide + L-glutamine + ATP + H2O = 2-formamido-N(1)-(5-O-phospho-beta-D-ribosyl)acetamidine + L-glutamate + ADP + phosphate + H(+). The protein operates within purine metabolism; IMP biosynthesis via de novo pathway; 5-amino-1-(5-phospho-D-ribosyl)imidazole from N(2)-formyl-N(1)-(5-phospho-D-ribosyl)glycinamide: step 1/2. Phosphoribosylformylglycinamidine synthase involved in the purines biosynthetic pathway. Catalyzes the ATP-dependent conversion of formylglycinamide ribonucleotide (FGAR) and glutamine to yield formylglycinamidine ribonucleotide (FGAM) and glutamate. The polypeptide is Phosphoribosylformylglycinamidine synthase (Salmonella typhimurium (strain LT2 / SGSC1412 / ATCC 700720)).